The following is a 195-amino-acid chain: uncharacterized protein (195 aa).

Positions 86 to 158 (LPSEGGWTSG…PAPVSGEPPE (73 aa)) are disordered.

This is an uncharacterized protein from Homo sapiens (Human).